The following is a 192-amino-acid chain: Recombination protein RecR (192 aa).

The segment at 51–66 adopts a C4-type zinc-finger fold; the sequence is CQTCFHLSADPECEIC. The Toprim domain occupies 74–168; sequence GLICVVADSR…PVSRIAYGLP (95 aa).

It belongs to the RecR family.

Its function is as follows. May play a role in DNA repair. It seems to be involved in an RecBC-independent recombinational process of DNA repair. It may act with RecF and RecO. In Parasynechococcus marenigrum (strain WH8102), this protein is Recombination protein RecR.